A 338-amino-acid polypeptide reads, in one-letter code: Ketol-acid reductoisomerase (NADP(+)) (338 aa).

One can recognise a KARI N-terminal Rossmann domain in the interval 1-181 (MKVYYDKDAD…GGTKGGVIET (181 aa)). Residues 24–27 (YGSQ), arginine 47, serine 52, and 82–85 (DESQ) contribute to the NADP(+) site. The active site involves histidine 107. Position 133 (glycine 133) interacts with NADP(+). The KARI C-terminal knotted domain maps to 182 to 327 (NFREETETDL…AELRAMMPWI (146 aa)). Residues aspartate 190, glutamate 194, glutamate 226, and glutamate 230 each contribute to the Mg(2+) site. Residue serine 251 participates in substrate binding.

The protein belongs to the ketol-acid reductoisomerase family. Requires Mg(2+) as cofactor.

It carries out the reaction (2R)-2,3-dihydroxy-3-methylbutanoate + NADP(+) = (2S)-2-acetolactate + NADPH + H(+). The catalysed reaction is (2R,3R)-2,3-dihydroxy-3-methylpentanoate + NADP(+) = (S)-2-ethyl-2-hydroxy-3-oxobutanoate + NADPH + H(+). It functions in the pathway amino-acid biosynthesis; L-isoleucine biosynthesis; L-isoleucine from 2-oxobutanoate: step 2/4. The protein operates within amino-acid biosynthesis; L-valine biosynthesis; L-valine from pyruvate: step 2/4. Functionally, involved in the biosynthesis of branched-chain amino acids (BCAA). Catalyzes an alkyl-migration followed by a ketol-acid reduction of (S)-2-acetolactate (S2AL) to yield (R)-2,3-dihydroxy-isovalerate. In the isomerase reaction, S2AL is rearranged via a Mg-dependent methyl migration to produce 3-hydroxy-3-methyl-2-ketobutyrate (HMKB). In the reductase reaction, this 2-ketoacid undergoes a metal-dependent reduction by NADPH to yield (R)-2,3-dihydroxy-isovalerate. In Chromobacterium violaceum (strain ATCC 12472 / DSM 30191 / JCM 1249 / CCUG 213 / NBRC 12614 / NCIMB 9131 / NCTC 9757 / MK), this protein is Ketol-acid reductoisomerase (NADP(+)).